A 359-amino-acid chain; its full sequence is MAHYKGAASEAGRAAQLMKKREIQQQEIEFRKKKIEEELKLDKIENKFATHYDAVEQQLKSSTIGLVTLDEMKAKQEDIVREREKKLAQKKDEKDREKQRALEAIQAEKNKQKRQIQALSFNLDDDEEEEEEDDEDHDKKQLKIKQEDQPKPKWTEIKEDILPIKKKKICKNPDVDTSFLPDREREEQENRLREQLRQEWVMQQAELKDEDISITFSYWDGSGHRRNVLMKKGNSIYQFLQKCLELLRKEFIELKTVMADQLMYVKEDLILPHHYSFYDFIVTKARGKSGPLFQFDVHDDVRMISDASVEKEESHAGKVLLRSWYERNKHIFPASRWEPYDPTKSYDKYTIKDKDKSKK.

2 disordered regions span residues 122–150 and 339–359; these read NLDD…EDQP and PYDP…KSKK. Positions 123 to 136 are enriched in acidic residues; it reads LDDDEEEEEEDDED. The span at 137-150 shows a compositional bias: basic and acidic residues; sequence HDKKQLKIKQEDQP.

This sequence belongs to the FAM50 family.

This is Protein FAM50 homolog from Drosophila melanogaster (Fruit fly).